The following is a 432-amino-acid chain: Adenosylmethionine-8-amino-7-oxononanoate aminotransferase (432 aa).

Trp-52 lines the substrate pocket. Position 112-113 (112-113 (GS)) interacts with pyridoxal 5'-phosphate. Residue Tyr-144 coordinates substrate. Asp-245 lines the pyridoxal 5'-phosphate pocket. Substrate-binding residues include Lys-274 and Gly-307. Lys-274 is modified (N6-(pyridoxal phosphate)lysine). 308 to 309 (PT) is a binding site for pyridoxal 5'-phosphate. Arg-391 contacts substrate.

Belongs to the class-III pyridoxal-phosphate-dependent aminotransferase family. BioA subfamily. As to quaternary structure, homodimer. Pyridoxal 5'-phosphate serves as cofactor.

The protein localises to the cytoplasm. The catalysed reaction is (8S)-8-amino-7-oxononanoate + S-adenosyl-L-methionine = S-adenosyl-4-methylsulfanyl-2-oxobutanoate + (7R,8S)-7,8-diammoniononanoate. It participates in cofactor biosynthesis; biotin biosynthesis; 7,8-diaminononanoate from 8-amino-7-oxononanoate (SAM route): step 1/1. Functionally, catalyzes the transfer of the alpha-amino group from S-adenosyl-L-methionine (SAM) to 7-keto-8-aminopelargonic acid (KAPA) to form 7,8-diaminopelargonic acid (DAPA). It is the only aminotransferase known to utilize SAM as an amino donor. The polypeptide is Adenosylmethionine-8-amino-7-oxononanoate aminotransferase (Buchnera aphidicola subsp. Schizaphis graminum (strain Sg)).